Here is a 197-residue protein sequence, read N- to C-terminus: Guanylate kinase (197 aa).

Position 2 is an N-acetylserine (serine 2). In terms of domain architecture, Guanylate kinase-like spans 4-186; the sequence is PRPVVLSGPS…AYAELKEALS (183 aa). Residue 14 to 19 coordinates ATP; that stretch reads GAGKST. 37–51 provides a ligand contact to substrate; it reads SHTTRNPRPGEENGK. Catalysis depends on residues arginine 44, arginine 137, and arginine 148. Residue arginine 137 participates in ATP binding. Residue 171–172 participates in ATP binding; sequence ND.

Belongs to the guanylate kinase family. As to quaternary structure, monomer. Interacts with RD3. In terms of tissue distribution, widely expressed.

The protein localises to the photoreceptor inner segment. It localises to the cytoplasm. It is found in the cytosol. Its subcellular location is the mitochondrion. It catalyses the reaction GMP + ATP = GDP + ADP. Up-regulated by RD3. Functionally, catalyzes the phosphorylation of GMP to GDP. Essential enzyme for recycling GMP and indirectly, cyclic GMP (cGMP). Involved in the cGMP metabolism in photoreceptors. It may also have a role in the survival and growth progression of some tumors. In addition to its physiological role, GUK1 is essential for converting prodrugs used for the treatment of cancers and viral infections into their pharmacologically active metabolites, most notably acyclovir, ganciclovir, and 6-thioguanine and its closely related analog 6-mercaptopurine. The protein is Guanylate kinase of Homo sapiens (Human).